We begin with the raw amino-acid sequence, 388 residues long: MIISAASDYRAAAQARLPPFLFHYIDGGAYAEHTLRRNVSDLADVALRQRVLRNMSDLRLSTELFGETLAMPVALAPVGLTGMYARRGEVQAARAAAARGIPFTLSTVSVCPIEEVAPAIERPMWFQLYVLKDRGFMRNALERAKAAGVTTLVFTVDMPTPGARYRDAHSGMSGPNASLRRMLQAVTHPRWAWDVGLLGRPHDLGNISAYRGSPTGLQDYIGWLGANFDPSIAWKDLEWIREFWTGPMVIKGILDPEDARDAVRFGADGIVVSNHGGRQLDGVLSSARALPAIADAVKGELKILADSGIRSGLDVVRMLALGADAVLLGRAFVYALAAAGQAGVENLLTLIEKEMRVAMTLTGTHSIAEISADALSRVTRERAETISP.

The FMN hydroxy acid dehydrogenase domain occupies 1–380 (MIISAASDYR…SADALSRVTR (380 aa)). Tyr24 contacts substrate. Residues Ser106 and Gln127 each contribute to the FMN site. Tyr129 provides a ligand contact to substrate. FMN is bound at residue Thr155. Substrate is bound at residue Arg164. Lys251 contacts FMN. The Proton acceptor role is filled by His275. Arg278 contributes to the substrate binding site. 306 to 330 (DSGIRSGLDVVRMLALGADAVLLGR) serves as a coordination point for FMN.

It belongs to the FMN-dependent alpha-hydroxy acid dehydrogenase family. The cofactor is FMN.

Its subcellular location is the cell inner membrane. The enzyme catalyses (S)-lactate + A = pyruvate + AH2. Its function is as follows. Catalyzes the conversion of L-lactate to pyruvate. Is coupled to the respiratory chain. The chain is L-lactate dehydrogenase from Xanthomonas euvesicatoria pv. vesicatoria (strain 85-10) (Xanthomonas campestris pv. vesicatoria).